The primary structure comprises 206 residues: Ribosomal RNA large subunit methyltransferase E (206 aa).

Positions 60, 62, 80, 96, and 121 each coordinate S-adenosyl-L-methionine. Catalysis depends on K161, which acts as the Proton acceptor.

The protein belongs to the class I-like SAM-binding methyltransferase superfamily. RNA methyltransferase RlmE family.

The protein localises to the cytoplasm. The enzyme catalyses uridine(2552) in 23S rRNA + S-adenosyl-L-methionine = 2'-O-methyluridine(2552) in 23S rRNA + S-adenosyl-L-homocysteine + H(+). In terms of biological role, specifically methylates the uridine in position 2552 of 23S rRNA at the 2'-O position of the ribose in the fully assembled 50S ribosomal subunit. The chain is Ribosomal RNA large subunit methyltransferase E from Francisella tularensis subsp. tularensis (strain FSC 198).